The sequence spans 95 residues: Small ribosomal subunit protein bS6 (95 aa).

This sequence belongs to the bacterial ribosomal protein bS6 family.

Functionally, binds together with bS18 to 16S ribosomal RNA. This chain is Small ribosomal subunit protein bS6, found in Oceanobacillus iheyensis (strain DSM 14371 / CIP 107618 / JCM 11309 / KCTC 3954 / HTE831).